We begin with the raw amino-acid sequence, 387 residues long: Patatin group A-2 (387 aa).

The N-terminal stretch at 1–23 (MATTKSFLILIVMILATTSSTFA) is a signal peptide. The 199-residue stretch at 32–230 (LSIDGGGIKG…TVADPALLSV (199 aa)) folds into the PNPLA domain. The GXGXXG signature appears at 36 to 41 (GGGIKG). Residues 75–79 (GTSTG) carry the GXSXG motif. Ser77 acts as the Nucleophile in catalysis. Asn115 carries N-linked (GlcNAc...) asparagine glycosylation. Asp216 functions as the Proton acceptor in the catalytic mechanism. The short motif at 216 to 218 (DGA) is the DGA/G element. Residues 361-385 (ETYEEALKRFAKLLSDRKKLRANKA) are a coiled coil.

It belongs to the patatin family. Tuber and stolon.

It localises to the vacuole. Its function is as follows. Probable lipolytic acyl hydrolase (LAH), an activity which is thought to be involved in the response of tubers to pathogens. The protein is Patatin group A-2 of Solanum tuberosum (Potato).